A 271-amino-acid polypeptide reads, in one-letter code: Thiazole synthase (271 aa).

K95 serves as the catalytic Schiff-base intermediate with DXP. Residues G156, 182–183 (AG), and 204–205 (NT) each bind 1-deoxy-D-xylulose 5-phosphate.

This sequence belongs to the ThiG family. Homotetramer. Forms heterodimers with either ThiH or ThiS.

It localises to the cytoplasm. It carries out the reaction [ThiS sulfur-carrier protein]-C-terminal-Gly-aminoethanethioate + 2-iminoacetate + 1-deoxy-D-xylulose 5-phosphate = [ThiS sulfur-carrier protein]-C-terminal Gly-Gly + 2-[(2R,5Z)-2-carboxy-4-methylthiazol-5(2H)-ylidene]ethyl phosphate + 2 H2O + H(+). Its pathway is cofactor biosynthesis; thiamine diphosphate biosynthesis. Catalyzes the rearrangement of 1-deoxy-D-xylulose 5-phosphate (DXP) to produce the thiazole phosphate moiety of thiamine. Sulfur is provided by the thiocarboxylate moiety of the carrier protein ThiS. In vitro, sulfur can be provided by H(2)S. This chain is Thiazole synthase, found in Yersinia pseudotuberculosis serotype O:3 (strain YPIII).